Reading from the N-terminus, the 235-residue chain is Ribose-5-phosphate isomerase A (235 aa).

Residues 32–35 (TGST), 89–92 (DGAD), and 102–105 (KGGG) each bind substrate. Glu-111 serves as the catalytic Proton acceptor. Lys-129 provides a ligand contact to substrate.

This sequence belongs to the ribose 5-phosphate isomerase family. Homodimer.

The catalysed reaction is aldehydo-D-ribose 5-phosphate = D-ribulose 5-phosphate. Its pathway is carbohydrate degradation; pentose phosphate pathway; D-ribose 5-phosphate from D-ribulose 5-phosphate (non-oxidative stage): step 1/1. In terms of biological role, catalyzes the reversible conversion of ribose-5-phosphate to ribulose 5-phosphate. This chain is Ribose-5-phosphate isomerase A, found in Synechocystis sp. (strain ATCC 27184 / PCC 6803 / Kazusa).